The following is a 517-amino-acid chain: Endoglucanase A (517 aa).

The N-terminal stretch at 1 to 25 (MKRSLLKTCSIIAGATIIFSSLSIS) is a signal peptide. The active-site Proton donor is the E185. The active-site Nucleophile is E309. The segment covering 382-392 (HPEATEDDKPS) has biased composition (basic and acidic residues). A disordered region spans residues 382–424 (HPEATEDDKPSTDVTNPDSGNTKPDSGNTNPGTETTTPTDNEK). Residues 393 to 407 (TDVTNPDSGNTKPDS) show a composition bias toward polar residues. Residues 408–420 (GNTNPGTETTTPT) are compositionally biased toward low complexity. The 102-residue stretch at 416 to 517 (TTTPTDNEKI…VISNFEYKFD (102 aa)) folds into the CBM2 domain.

The protein belongs to the glycosyl hydrolase 5 (cellulase A) family.

It carries out the reaction Endohydrolysis of (1-&gt;4)-beta-D-glucosidic linkages in cellulose, lichenin and cereal beta-D-glucans.. Functionally, hydrolyzes barley beta-glucan, lichenan, carboxymethylcellulose and xylan. It shows preferential activity against the larger cellooligosaccharides (cellohexaose and cellopentaose); cellotetraose is the smallest substrate degraded completely. The sequence is that of Endoglucanase A (celA) from Clostridium longisporum.